Reading from the N-terminus, the 714-residue chain is Mitochondrial division protein 1 (714 aa).

Positions 240 to 298 (LNIQKNSTLSEIRDIEVEVENLRQKKEKLLGKIANIEQNQLLLEDNLKQIDDRLDFLEE) form a coiled coil. A disordered region spans residues 323–354 (LKNDAIRNEGVTTESISSEASNLPPRRRQQLR). Residues 332–343 (GVTTESISSEAS) show a composition bias toward polar residues. S376 bears the Phosphoserine mark. 7 WD repeats span residues 396-436 (THDD…KIGE), 439-478 (GHLA…QLYQ), 500-539 (AHTD…QTID), 561-603 (TQRN…RTLK), 604-642 (GHTD…NKFH), 644-681 (YSAP…SWSC), and 685-714 (GNET…IWAV).

Belongs to the WD repeat MDV1/CAF4 family. In terms of assembly, interacts with CAF4, DNM1 and FIS1, components of the mitochondrial fission machinery. Interacts via its N-terminal, coiled-coil extension (NTE) with FIS1, and via its WD repeats with DNM1.

It localises to the mitochondrion outer membrane. Involved in mitochondrial fission. Has a partially redundant function to CAF4 in acting as an adapter protein, binding to FIS1 on the mitochondrial outer membrane and recruiting the dynamin-like GTPase DNM1 to form mitochondrial fission complexes. Formation of these complexes is required to promote constriction and fission of the mitochondrial compartment at a late step in mitochondrial division. This chain is Mitochondrial division protein 1 (MDV1), found in Saccharomyces cerevisiae (strain ATCC 204508 / S288c) (Baker's yeast).